The chain runs to 131 residues: Large ribosomal subunit protein bL12 (131 aa).

This sequence belongs to the bacterial ribosomal protein bL12 family. In terms of assembly, homodimer. Part of the ribosomal stalk of the 50S ribosomal subunit. Forms a multimeric L10(L12)X complex, where L10 forms an elongated spine to which 2 to 4 L12 dimers bind in a sequential fashion. Binds GTP-bound translation factors.

Its function is as follows. Forms part of the ribosomal stalk which helps the ribosome interact with GTP-bound translation factors. Is thus essential for accurate translation. The protein is Large ribosomal subunit protein bL12 of Prochlorococcus marinus (strain NATL1A).